Consider the following 339-residue polypeptide: tRNA N6-adenosine threonylcarbamoyltransferase (339 aa).

Fe cation-binding residues include His-115 and His-119. Substrate is bound by residues 136-140, Asp-168, Glu-185, and Ser-265; that span reads LISGG. Asp-293 lines the Fe cation pocket.

This sequence belongs to the KAE1 / TsaD family. The cofactor is Fe(2+).

The protein resides in the cytoplasm. The catalysed reaction is L-threonylcarbamoyladenylate + adenosine(37) in tRNA = N(6)-L-threonylcarbamoyladenosine(37) in tRNA + AMP + H(+). In terms of biological role, required for the formation of a threonylcarbamoyl group on adenosine at position 37 (t(6)A37) in tRNAs that read codons beginning with adenine. Is probably involved in the transfer of the threonylcarbamoyl moiety of threonylcarbamoyl-AMP (TC-AMP) to the N6 group of A37. This is tRNA N6-adenosine threonylcarbamoyltransferase from Pyrobaculum calidifontis (strain DSM 21063 / JCM 11548 / VA1).